A 295-amino-acid polypeptide reads, in one-letter code: Phosphoenolpyruvate phosphomutase (295 aa).

The Nucleophile role is filled by Asp58. A Mg(2+)-binding site is contributed by Asp58.

Belongs to the isocitrate lyase/PEP mutase superfamily. PEP mutase family. In terms of assembly, homotetramer. Requires Mg(2+) as cofactor.

The enzyme catalyses phosphoenolpyruvate + H(+) = 3-phosphonopyruvate. Its pathway is phosphorus metabolism; phosphonate biosynthesis. In terms of biological role, formation of a carbon-phosphorus bond by converting phosphoenolpyruvate (PEP) to phosphonopyruvate (P-Pyr). This is Phosphoenolpyruvate phosphomutase from Mytilus edulis (Blue mussel).